Reading from the N-terminus, the 269-residue chain is Tryptophan synthase alpha chain (269 aa).

Active-site proton acceptor residues include Glu-49 and Asp-60.

It belongs to the TrpA family. Tetramer of two alpha and two beta chains.

It catalyses the reaction (1S,2R)-1-C-(indol-3-yl)glycerol 3-phosphate + L-serine = D-glyceraldehyde 3-phosphate + L-tryptophan + H2O. It functions in the pathway amino-acid biosynthesis; L-tryptophan biosynthesis; L-tryptophan from chorismate: step 5/5. Functionally, the alpha subunit is responsible for the aldol cleavage of indoleglycerol phosphate to indole and glyceraldehyde 3-phosphate. This chain is Tryptophan synthase alpha chain, found in Photobacterium profundum (strain SS9).